Reading from the N-terminus, the 97-residue chain is MAARMGVLSVAGFRAAARAGGLLARPKQSTAVVPCRTVIASSAGAILPKPEKVSFGLLRVFTVVIPFLYIGTLISKNFAAVLEEHDIFVPEDDDDDD.

Residues 1 to 37 (MAARMGVLSVAGFRAAARAGGLLARPKQSTAVVPCRT) constitute a mitochondrion transit peptide. At 38 to 55 (VIASSAGAILPKPEKVSF) the chain is on the mitochondrial matrix side. The chain crosses the membrane as a helical span at residues 56-75 (GLLRVFTVVIPFLYIGTLIS). The Mitochondrial intermembrane portion of the chain corresponds to 76 to 97 (KNFAAVLEEHDIFVPEDDDDDD).

The protein belongs to the SMDT1/EMRE family. Component of the uniplex complex.

It localises to the mitochondrion inner membrane. In terms of biological role, essential regulatory subunit of the mitochondrial calcium uniporter complex (uniplex), a complex that mediates calcium uptake into mitochondria. Required to bridge the calcium-sensing proteins micu1 with the calcium-conducting subunit mcu. Acts by mediating activation of mcu and retention of micu1 to the mcu pore, in order to ensure tight regulation of the uniplex complex and appropriate responses to intracellular calcium signaling. This is Essential MCU regulator, mitochondrial from Xenopus laevis (African clawed frog).